Here is a 99-residue protein sequence, read N- to C-terminus: High mobility group nucleosome-binding domain-containing protein 3 (99 aa).

2 stretches are compositionally biased toward basic and acidic residues: residues 1-25 (MPKR…EPTR) and 39-53 (PESK…KEPG). Residues 1–99 (MPKRKSPENT…RTESIEKEGE (99 aa)) are disordered. Ser6 carries the phosphoserine modification. Thr10 is subject to Phosphothreonine. Residues Ser78 and Ser93 each carry the phosphoserine modification. Basic and acidic residues predominate over residues 83 to 99 (TKVEEAQRTESIEKEGE).

This sequence belongs to the HMGN family. Interacts with the ligand binding domain of the thyroid receptor (TR) (in vitro). Requires the presence of thyroid hormone for its interaction. Interacts with transcriptional regulator SEHBP. Interacts with nucleosomes. In terms of tissue distribution, expressed in the brain, eye, prostate, thyroid, kidney, testis, glial cells and insulin-producing cells of the Langerhans pancreatic islets. In the brain, expressed in the lateral olfactory tract, anterior commissure, corpus callosum, internal capsule, fornix, stria medullans, optic tract, axon bundles, Purkinje cell layer and granular layer of the cerebellum. In retina, expressed in the nuclei of cells in the inner nuclear layer including amacrine, bipolar and horizontal neurons and in the nuclei of ganglion neurons. Detected at low levels in the liver.

The protein resides in the nucleus. Binds to nucleosomes, regulating chromatin structure and consequently, chromatin-dependent processes such as transcription, DNA replication and DNA repair. Affects both insulin and glucagon levels and modulates the expression of pancreatic genes involved in insulin secretion. Regulates the expression of the glucose transporter SLC2A2 by binding specifically to its promoter region and recruiting PDX1 and additional transcription factors. Regulates the expression of SLC6A9, a glycine transporter which regulates the glycine concentration in synaptic junctions in the central nervous system, by binding to its transcription start site. May play a role in ocular development and astrocyte function. The protein is High mobility group nucleosome-binding domain-containing protein 3 (Hmgn3) of Mus musculus (Mouse).